We begin with the raw amino-acid sequence, 142 residues long: Ctenidin-3 (142 aa).

The first 19 residues, 1–19, serve as a signal peptide directing secretion; it reads MKHLIPLIVMASVVLAVYA. Tyr-139 carries the post-translational modification Tyrosine amide.

As to expression, expressed in hemocytes (at protein level).

It localises to the secreted. Functionally, antimicrobial protein with bacteriostatic activity against the Gram-negative bacterium E.coli, and very weak activity against the Gram-positive bacterium S.aureus. Lacks activity against the yeast C.albicans. The chain is Ctenidin-3 from Cupiennius salei (American wandering spider).